Consider the following 245-residue polypeptide: DNA polymerase sliding clamp 2 (245 aa).

This sequence belongs to the PCNA family. Forms homodimers with PCNA1, which then recruit PCNA3; does not form homotrimers. The heterodimers interact with RfcS homotetramers. Heterotrimer which circularizes head-to-tail (head is at N-terminus, tail is at C-terminus) to form a toroid; DNA passes through its center. Replication factor C (RFC) is required to load the toroid on the DNA. This subunit interacts with DNA polymerase I (dpo1). The heterotrimer also interacts with flap endonuclease 1, DNA ligase and XPF via the other subunits.

Its function is as follows. One of the sliding clamp subunits that acts as a moving platform for DNA processing. Responsible for tethering the catalytic subunit of DNA polymerase to DNA during high-speed replication. Heterotrimer stimulates the Holliday junction resolvase Hjc. DNA polymerase I, DNA ligase and the flap endonuclease may be constitutively associated with the PCNA heterotrimer forming a scanning complex able to couple DNA synthesis and Okazaki fragment maturation. This Saccharolobus solfataricus (strain ATCC 35092 / DSM 1617 / JCM 11322 / P2) (Sulfolobus solfataricus) protein is DNA polymerase sliding clamp 2.